Consider the following 486-residue polypeptide: CUGBP Elav-like family member 1 (486 aa).

Residue M1 is modified to N-acetylmethionine. Residue T4 is modified to Phosphothreonine. 2 RRM domains span residues 16 to 99 and 108 to 188; these read IKMF…PADS and RKLF…FADT. K109 is covalently cross-linked (Glycyl lysine isopeptide (Lys-Gly) (interchain with G-Cter in SUMO2)). Residues S179 and S302 each carry the phosphoserine modification. Residues 277–309 are disordered; sequence TPSGTNALTTSSSPLSVLTSSGSSPSSSSSNSV. The span at 284 to 309 shows a compositional bias: low complexity; sequence LTTSSSPLSVLTSSGSSPSSSSSNSV. The 79-residue stretch at 401–479 folds into the RRM 3 domain; that stretch reads ANLFIYHLPQ…KRLKVQLKRS (79 aa).

The protein belongs to the CELF/BRUNOL family. Component of an EIF2 complex at least composed of CELF1/CUGBP1, CALR, CALR3, EIF2S1, EIF2S2, HSP90B1 and HSPA5. Associates with polysomes. Interacts with HNRNPH1; the interaction in RNA-dependent. Interacts with PARN. In terms of processing, phosphorylated. Its phosphorylation status increases in senescent cells. In terms of tissue distribution, ubiquitous.

It is found in the nucleus. The protein localises to the cytoplasm. In terms of biological role, RNA-binding protein implicated in the regulation of several post-transcriptional events. Involved in pre-mRNA alternative splicing, mRNA translation and stability. Mediates exon inclusion and/or exclusion in pre-mRNA that are subject to tissue-specific and developmentally regulated alternative splicing. Specifically activates exon 5 inclusion of cardiac isoforms of TNNT2 during heart remodeling at the juvenile to adult transition. Acts both as an activator and as a repressor of a pair of coregulated exons: promotes inclusion of the smooth muscle (SM) exon but exclusion of the non-muscle (NM) exon in actinin pre-mRNAs. Activates SM exon 5 inclusion by antagonizing the repressive effect of PTB. Promotes exclusion of exon 11 of the INSR pre-mRNA. Inhibits, together with HNRNPH1, insulin receptor (IR) pre-mRNA exon 11 inclusion in myoblast. Increases translation and controls the choice of translation initiation codon of CEBPB mRNA. Increases mRNA translation of CEBPB in aging liver. Increases translation of CDKN1A mRNA by antagonizing the repressive effect of CALR3. Mediates rapid cytoplasmic mRNA deadenylation. Recruits the deadenylase PARN to the poly(A) tail of EDEN-containing mRNAs to promote their deadenylation. Required for completion of spermatogenesis. Binds to (CUG)n triplet repeats in the 3'-UTR of transcripts such as DMPK and to Bruno response elements (BREs). Binds to muscle-specific splicing enhancer (MSE) intronic sites flanking the alternative exon 5 of TNNT2 pre-mRNA. Binds to AU-rich sequences (AREs or EDEN-like) localized in the 3'-UTR of JUN and FOS mRNAs. Binds to the IR RNA. Binds to the 5'-region of CDKN1A and CEBPB mRNAs. Binds with the 5'-region of CEBPB mRNA in aging liver. May be a specific regulator of miRNA biogenesis. Binds to primary microRNA pri-MIR140 and, with CELF2, negatively regulates the processing to mature miRNA. This chain is CUGBP Elav-like family member 1 (CELF1), found in Homo sapiens (Human).